The primary structure comprises 314 residues: DNA-directed RNA polymerase subunit alpha (314 aa).

The interval 1–228 is alpha N-terminal domain (alpha-NTD); it reads MIEFEKPNIH…DHLSIFVNLT (228 aa). Residues 245-314 are alpha C-terminal domain (alpha-CTD); that stretch reads KEKMLEMTIE…DLGLSLRKED (70 aa).

Belongs to the RNA polymerase alpha chain family. Homodimer. The RNAP catalytic core consists of 2 alpha, 1 beta, 1 beta' and 1 omega subunit. When a sigma factor is associated with the core the holoenzyme is formed, which can initiate transcription.

The enzyme catalyses RNA(n) + a ribonucleoside 5'-triphosphate = RNA(n+1) + diphosphate. Functionally, DNA-dependent RNA polymerase catalyzes the transcription of DNA into RNA using the four ribonucleoside triphosphates as substrates. The chain is DNA-directed RNA polymerase subunit alpha from Lactiplantibacillus plantarum (strain ATCC BAA-793 / NCIMB 8826 / WCFS1) (Lactobacillus plantarum).